The primary structure comprises 267 residues: LysM and putative peptidoglycan-binding domain-containing protein 4 (267 aa).

The Extracellular segment spans residues 1–211 (MRRGDPPPRA…RSNGADWGIQ (211 aa)). A disordered region spans residues 30–64 (HRQEEPEASSEDEELNVMELRPRSRDSSSKEKEGV). Residues 35–45 (PEASSEDEELN) are compositionally biased toward acidic residues. The span at 49 to 64 (LRPRSRDSSSKEKEGV) shows a compositional bias: basic and acidic residues. Residues 70 to 114 (LERDISHEDNLSKLALQYGCKVADIKRVNNLFQEQDMYALKSIKI) enclose the LysM domain. N-linked (GlcNAc...) asparagine glycosylation occurs at Asn79. The disordered stretch occupies residues 130–152 (RTPQQRPSHDAAPSNSAMASVSG). Positions 142–152 (PSNSAMASVSG) are enriched in polar residues. The helical transmembrane segment at 212–232 (WWNAVIAMLLIGIVLPIFYVV) threads the bilayer. Residues 233-267 (YYKTKDSGESAVDNVGVNISVSTSNSTREYNGKSP) lie on the Cytoplasmic side of the membrane.

The protein resides in the membrane. The polypeptide is LysM and putative peptidoglycan-binding domain-containing protein 4 (lysmd4) (Danio rerio (Zebrafish)).